The sequence spans 256 residues: Phosphonates import ATP-binding protein PhnC (256 aa).

In terms of domain architecture, ABC transporter spans 7–251 (IEMKNVTKVY…VFDNIYNGGK (245 aa)). Residue 40 to 47 (GLSGAGKS) participates in ATP binding.

This sequence belongs to the ABC transporter superfamily. Phosphonates importer (TC 3.A.1.9.1) family. The complex is composed of two ATP-binding proteins (PhnC), two transmembrane proteins (PhnE) and a solute-binding protein (PhnD).

It localises to the cell membrane. The catalysed reaction is phosphonate(out) + ATP + H2O = phosphonate(in) + ADP + phosphate + H(+). Part of the ABC transporter complex PhnCDE involved in phosphonates import. Responsible for energy coupling to the transport system. This Lactobacillus delbrueckii subsp. bulgaricus (strain ATCC 11842 / DSM 20081 / BCRC 10696 / JCM 1002 / NBRC 13953 / NCIMB 11778 / NCTC 12712 / WDCM 00102 / Lb 14) protein is Phosphonates import ATP-binding protein PhnC.